The following is a 471-amino-acid chain: MTDLPDSTRWQLWIVAFGFFMQSLDTTIVNTALPSMAQSLGESPLHMHMVIVSYVLTVAVMLPASGWLADKVGVRNIFFTAIVLFTLGSLFCALSGTLNELLLARALQGVGGAMMVPVGRLTVMKIVPREQYMAAMTFVTLPGQIGPLLGPALGGLLVEYASWHWIFLINIPVGIIGAIATLMLMPNYTMQTRRFDLSGFLLLAVGMAVLTLALDGSKGTGFSPLAIAGLVAVGVVALVLYLLHAQNNNRALFSLKLFRTRTFSLGLAGSFAGRIGSGMLPFMTPVFLQIGLGFSPFHAGLMMIPMVLGSMGMKRIVVQVVNRFGYRWVLVATTLGLSLVTLLFMTTALLGWYYVLPFVLFLQGMVNSTRFSSMNTLTLKDLPDNLASSGNSLLSMIMQLSMSIGVTIAGLLLGLFGSQHVSVDSGTTQTVFMYTWLSMAFIIALPAFVFARVPSDTHQNVAISRRKRSAQ.

Residues 1–11 lie on the Periplasmic side of the membrane; the sequence is MTDLPDSTRWQ. The helical transmembrane segment at 12–32 threads the bilayer; the sequence is LWIVAFGFFMQSLDTTIVNTA. Residues 33–48 lie on the Cytoplasmic side of the membrane; the sequence is LPSMAQSLGESPLHMH. A helical transmembrane segment spans residues 49-69; it reads MVIVSYVLTVAVMLPASGWLA. At 70-76 the chain is on the periplasmic side; the sequence is DKVGVRN. A helical membrane pass occupies residues 77-97; it reads IFFTAIVLFTLGSLFCALSGT. At 98–101 the chain is on the cytoplasmic side; the sequence is LNEL. Residues 102–124 traverse the membrane as a helical segment; sequence LLARALQGVGGAMMVPVGRLTVM. Residues 125-137 lie on the Periplasmic side of the membrane; that stretch reads KIVPREQYMAAMT. The chain crosses the membrane as a helical span at residues 138-158; the sequence is FVTLPGQIGPLLGPALGGLLV. Topologically, residues 159-164 are cytoplasmic; the sequence is EYASWH. Residues 165 to 185 traverse the membrane as a helical segment; it reads WIFLINIPVGIIGAIATLMLM. Residues 186 to 196 are Periplasmic-facing; the sequence is PNYTMQTRRFD. Residues 197–217 form a helical membrane-spanning segment; sequence LSGFLLLAVGMAVLTLALDGS. Over 218–224 the chain is Cytoplasmic; that stretch reads KGTGFSP. Residues 225-245 form a helical membrane-spanning segment; sequence LAIAGLVAVGVVALVLYLLHA. The Periplasmic segment spans residues 246–262; the sequence is QNNNRALFSLKLFRTRT. Residues 263 to 283 traverse the membrane as a helical segment; it reads FSLGLAGSFAGRIGSGMLPFM. Residues 284–285 are Cytoplasmic-facing; the sequence is TP. The helical transmembrane segment at 286–306 threads the bilayer; that stretch reads VFLQIGLGFSPFHAGLMMIPM. Over 307–341 the chain is Periplasmic; sequence VLGSMGMKRIVVQVVNRFGYRWVLVATTLGLSLVT. Residues 342-362 form a helical membrane-spanning segment; that stretch reads LLFMTTALLGWYYVLPFVLFL. The Cytoplasmic segment spans residues 363–395; that stretch reads QGMVNSTRFSSMNTLTLKDLPDNLASSGNSLLS. A helical transmembrane segment spans residues 396–416; sequence MIMQLSMSIGVTIAGLLLGLF. The Periplasmic segment spans residues 417–430; sequence GSQHVSVDSGTTQT. Residues 431–451 traverse the membrane as a helical segment; the sequence is VFMYTWLSMAFIIALPAFVFA. Residues 452–471 are Cytoplasmic-facing; the sequence is RVPSDTHQNVAISRRKRSAQ.

Belongs to the major facilitator superfamily. TCR/Tet family.

It is found in the cell inner membrane. The chain is Putative multidrug resistance protein MdtD from Escherichia coli O81 (strain ED1a).